We begin with the raw amino-acid sequence, 276 residues long: NADPH-dependent 7-cyano-7-deazaguanine reductase (276 aa).

Residue 83 to 85 (IES) participates in substrate binding. 85–86 (SK) contacts NADPH. Catalysis depends on Cys184, which acts as the Thioimide intermediate. The active-site Proton donor is the Asp191. Substrate is bound at residue 223–224 (HE). 252 to 253 (RG) provides a ligand contact to NADPH.

This sequence belongs to the GTP cyclohydrolase I family. QueF type 2 subfamily. Homodimer.

The protein localises to the cytoplasm. It catalyses the reaction 7-aminomethyl-7-carbaguanine + 2 NADP(+) = 7-cyano-7-deazaguanine + 2 NADPH + 3 H(+). It participates in tRNA modification; tRNA-queuosine biosynthesis. Functionally, catalyzes the NADPH-dependent reduction of 7-cyano-7-deazaguanine (preQ0) to 7-aminomethyl-7-deazaguanine (preQ1). The polypeptide is NADPH-dependent 7-cyano-7-deazaguanine reductase (Pseudomonas fluorescens (strain Pf0-1)).